The sequence spans 338 residues: Ketol-acid reductoisomerase (NADP(+)) (338 aa).

In terms of domain architecture, KARI N-terminal Rossmann spans 1-181 (MQIFYDKDCD…GGGRTGIIET (181 aa)). Residues 24–27 (YGSQ), R47, S50, S52, and 82–85 (DEFQ) contribute to the NADP(+) site. Residue H107 is part of the active site. G133 is a binding site for NADP(+). The KARI C-terminal knotted domain maps to 182–327 (SFREETETDL…AKLRAMMPWI (146 aa)). Mg(2+)-binding residues include D190, E194, E226, and E230. Residue S251 coordinates substrate.

It belongs to the ketol-acid reductoisomerase family. Requires Mg(2+) as cofactor.

The catalysed reaction is (2R)-2,3-dihydroxy-3-methylbutanoate + NADP(+) = (2S)-2-acetolactate + NADPH + H(+). It carries out the reaction (2R,3R)-2,3-dihydroxy-3-methylpentanoate + NADP(+) = (S)-2-ethyl-2-hydroxy-3-oxobutanoate + NADPH + H(+). Its pathway is amino-acid biosynthesis; L-isoleucine biosynthesis; L-isoleucine from 2-oxobutanoate: step 2/4. It functions in the pathway amino-acid biosynthesis; L-valine biosynthesis; L-valine from pyruvate: step 2/4. Functionally, involved in the biosynthesis of branched-chain amino acids (BCAA). Catalyzes an alkyl-migration followed by a ketol-acid reduction of (S)-2-acetolactate (S2AL) to yield (R)-2,3-dihydroxy-isovalerate. In the isomerase reaction, S2AL is rearranged via a Mg-dependent methyl migration to produce 3-hydroxy-3-methyl-2-ketobutyrate (HMKB). In the reductase reaction, this 2-ketoacid undergoes a metal-dependent reduction by NADPH to yield (R)-2,3-dihydroxy-isovalerate. This is Ketol-acid reductoisomerase (NADP(+)) from Acinetobacter baumannii (strain AB0057).